Here is a 187-residue protein sequence, read N- to C-terminus: Late expression factor 11 (187 aa).

Disordered stretches follow at residues 1-24 (MAPAVVGASQLRGGDSPGPARNRD) and 119-187 (GDTK…QSQQ).

It belongs to the baculoviridae LEF-11 family.

Functionally, involved in late/very late gene activation. The polypeptide is Late expression factor 11 (LEF-11) (Lymantria dispar multicapsid nuclear polyhedrosis virus (LdMNPV)).